The following is a 376-amino-acid chain: Coatomer subunit delta-4 (376 aa).

Residues Leu-65–Gly-92 are disordered. Residues Thr-80–Gly-92 are compositionally biased toward gly residues. Residues Ser-134–Val-376 form the MHD domain.

The protein belongs to the adaptor complexes medium subunit family. Delta-COP subfamily. In terms of assembly, oligomeric complex that consists of at least the alpha, beta, beta', gamma, delta, epsilon and zeta subunits.

It localises to the cytoplasm. Its subcellular location is the golgi apparatus membrane. It is found in the cytoplasmic vesicle. The protein localises to the COPI-coated vesicle membrane. Functionally, the coatomer is a cytosolic protein complex that binds to dilysine motifs and reversibly associates with Golgi non-clathrin-coated vesicles, which further mediate biosynthetic protein transport from the ER, via the Golgi up to the trans Golgi network. Coatomer complex is required for budding from Golgi membranes, and is essential for the retrograde Golgi-to-ER transport of dilysine-tagged proteins. This is Coatomer subunit delta-4 from Oryza sativa subsp. japonica (Rice).